A 447-amino-acid chain; its full sequence is Adenylosuccinate synthetase (447 aa).

Residues 12–18 (GDEGKGK) and 40–42 (GHT) contribute to the GTP site. Asp-13 (proton acceptor) is an active-site residue. Residues Asp-13 and Gly-40 each coordinate Mg(2+). IMP-binding positions include 13 to 16 (DEGK), 38 to 41 (NAGH), Thr-128, Arg-142, Gln-223, Thr-238, and Arg-302. His-41 functions as the Proton donor in the catalytic mechanism. 298–304 (TTTGRKR) is a substrate binding site. Residues Arg-304, 330-332 (KLD), and 412-414 (SLG) contribute to the GTP site.

It belongs to the adenylosuccinate synthetase family. As to quaternary structure, homodimer. The cofactor is Mg(2+).

It localises to the cytoplasm. It carries out the reaction IMP + L-aspartate + GTP = N(6)-(1,2-dicarboxyethyl)-AMP + GDP + phosphate + 2 H(+). The protein operates within purine metabolism; AMP biosynthesis via de novo pathway; AMP from IMP: step 1/2. Plays an important role in the de novo pathway of purine nucleotide biosynthesis. Catalyzes the first committed step in the biosynthesis of AMP from IMP. In Nostoc punctiforme (strain ATCC 29133 / PCC 73102), this protein is Adenylosuccinate synthetase.